An 889-amino-acid polypeptide reads, in one-letter code: DNA mismatch repair protein MutS (889 aa).

641–648 (GPNMAGKS) lines the ATP pocket.

This sequence belongs to the DNA mismatch repair MutS family.

Functionally, this protein is involved in the repair of mismatches in DNA. It is possible that it carries out the mismatch recognition step. This protein has a weak ATPase activity. The chain is DNA mismatch repair protein MutS from Orientia tsutsugamushi (strain Ikeda) (Rickettsia tsutsugamushi).